A 130-amino-acid polypeptide reads, in one-letter code: Small ribosomal subunit protein uS11c (130 aa).

This sequence belongs to the universal ribosomal protein uS11 family. Part of the 30S ribosomal subunit.

It is found in the plastid. Its subcellular location is the chloroplast. This is Small ribosomal subunit protein uS11c from Physcomitrium patens (Spreading-leaved earth moss).